The primary structure comprises 242 residues: MNTEKPSVAHNVDHNEIAKFEAVASRWWDLKGEFKPLHRINPLRLGYITERSGGLFGKKVLDVGCGGGILAESMAREGATVTGLDMGFEPLQVAKLHALESGIEVEYVQETVEEHAAKHAQQYDVVTCMEMLEHVPDPQSVVHACAQLVKPGGEVFFSTLNRNGKSWLMAVVGAEYILRMVPKGTHDVKKFIKPAELLSWVDETVLKEQHITGLHYNPITNTFKLGPGVDVNYMLHTRAKKA.

4 residues coordinate S-adenosyl-L-methionine: Arg-44, Gly-64, Asp-85, and Met-129.

It belongs to the methyltransferase superfamily. UbiG/COQ3 family.

It catalyses the reaction a 3-demethylubiquinol + S-adenosyl-L-methionine = a ubiquinol + S-adenosyl-L-homocysteine + H(+). The enzyme catalyses a 3-(all-trans-polyprenyl)benzene-1,2-diol + S-adenosyl-L-methionine = a 2-methoxy-6-(all-trans-polyprenyl)phenol + S-adenosyl-L-homocysteine + H(+). Its pathway is cofactor biosynthesis; ubiquinone biosynthesis. Its function is as follows. O-methyltransferase that catalyzes the 2 O-methylation steps in the ubiquinone biosynthetic pathway. This is Ubiquinone biosynthesis O-methyltransferase from Salmonella typhi.